A 684-amino-acid polypeptide reads, in one-letter code: MADSGNPNENTPSVATGENGEVTGSYNASAITVLEGLDAVRKRPGMYIGSTGERGLHHLVTEVVDNSVDEALAGHADTIDVTILADGGVRVVDNGRGIPVGIVPSEGKPAVEVVLTVLHAGGKFGGGGYSVSGGLHGVGVSVVNALSTKVAVEVKTDGYRWTQDYKLGVPTRRCAQNEATDETGTTVTFWADPDVFETTEYSFETLSRRFQEMAFLNKGLTLKLTDERESAKAVVGADVAGTDSAETPGEEPVRSVTYYYEGGIVDFVKYLNSRKGDLIHPTVIDIDAEDKERMLSVEIAMQWNSQYSEGVYSFANTIHTHEGGTHEEGFRAAMTGLVNRYAREKKFLREKDDNLAGEDIREGLTAIISVKLGEPQFEGQTKTKLGNTEAKTFVQKIVHEHLTDWFDRHPNEAADIIRKSIQAATARVAARKARDLTRRKGLLESASLPGKLSDCQSNDPSKCEIFIVEGDSAGGSAKSGRNPQYQAILPIRGKILNVEKARIDKILQNTEVQALISAFGTGVHEDFDIEKLRYHKIILMADADVDGQHINTLLLTFLFRFMRPLVEAGHVYLSRPPLYKIKWGRDDFEYAYSDRERDALVELGKQNGKRIKEDSIQRFKGLGEMNAEELRITTMDVDHRVLGQVTLDDAAQADDLFSVLMGEDVEARRSFIQRNAKDVRFLDI.

The interval Met1–Val22 is disordered. The segment at Val154–Gln302 is novobiocin-binding. The 115-residue stretch at Cys463–Pro577 folds into the Toprim domain. Positions 469, 542, and 544 each coordinate Mg(2+).

This sequence belongs to the type II topoisomerase GyrB family. In terms of assembly, heterotetramer, composed of two GyrA and two GyrB chains. In the heterotetramer, GyrA contains the active site tyrosine that forms a transient covalent intermediate with DNA, while GyrB binds cofactors and catalyzes ATP hydrolysis. Mg(2+) is required as a cofactor. Requires Mn(2+) as cofactor. It depends on Ca(2+) as a cofactor.

It is found in the cytoplasm. It catalyses the reaction ATP-dependent breakage, passage and rejoining of double-stranded DNA.. Functionally, a type II topoisomerase that negatively supercoils closed circular double-stranded (ds) DNA in an ATP-dependent manner to modulate DNA topology and maintain chromosomes in an underwound state. Negative supercoiling favors strand separation, and DNA replication, transcription, recombination and repair, all of which involve strand separation. Also able to catalyze the interconversion of other topological isomers of dsDNA rings, including catenanes and knotted rings. Type II topoisomerases break and join 2 DNA strands simultaneously in an ATP-dependent manner. This chain is DNA gyrase subunit B, novobiocin-sensitive, found in Streptomyces niveus (Streptomyces spheroides).